Consider the following 137-residue polypeptide: Probable 4-amino-4-deoxy-L-arabinose-phosphoundecaprenol flippase subunit ArnF (137 aa).

A run of 3 helical transmembrane segments spans residues 43-63 (AIAV…FWLL), 74-94 (YSLL…LPFF), and 98-118 (FTVS…TINL).

This sequence belongs to the ArnF family. In terms of assembly, heterodimer of ArnE and ArnF.

It localises to the cell inner membrane. The protein operates within bacterial outer membrane biogenesis; lipopolysaccharide biosynthesis. In terms of biological role, translocates 4-amino-4-deoxy-L-arabinose-phosphoundecaprenol (alpha-L-Ara4N-phosphoundecaprenol) from the cytoplasmic to the periplasmic side of the inner membrane. This is Probable 4-amino-4-deoxy-L-arabinose-phosphoundecaprenol flippase subunit ArnF from Pseudomonas savastanoi pv. phaseolicola (strain 1448A / Race 6) (Pseudomonas syringae pv. phaseolicola (strain 1448A / Race 6)).